The sequence spans 116 residues: Large ribosomal subunit protein uL24c (116 aa).

The protein belongs to the universal ribosomal protein uL24 family. As to quaternary structure, part of the 50S ribosomal subunit.

The protein resides in the plastid. It localises to the chloroplast. Functionally, one of two assembly initiator proteins, it binds directly to the 5'-end of the 23S rRNA, where it nucleates assembly of the 50S subunit. The polypeptide is Large ribosomal subunit protein uL24c (rpl24) (Pyropia yezoensis (Susabi-nori)).